A 71-amino-acid chain; its full sequence is uncharacterized protein (71 aa).

It belongs to the varicellovirus ORF57 protein family.

This is an uncharacterized protein from Homo sapiens (Human).